Consider the following 448-residue polypeptide: tRNA-2-methylthio-N(6)-dimethylallyladenosine synthase (448 aa).

Positions 2-119 constitute an MTTase N-terminal domain; sequence KKLYIKTFGC…LSDLIAQRRK (118 aa). [4Fe-4S] cluster-binding residues include C11, C48, C82, C156, C160, and C163. One can recognise a Radical SAM core domain in the interval 142–375; that stretch reads RQTRGSAYVS…LALIEGQSNQ (234 aa). In terms of domain architecture, TRAM spans 378–444; it reads QKMLGKTERV…NYTLRGELVE (67 aa).

Belongs to the methylthiotransferase family. MiaB subfamily. As to quaternary structure, monomer. Requires [4Fe-4S] cluster as cofactor.

It is found in the cytoplasm. The enzyme catalyses N(6)-dimethylallyladenosine(37) in tRNA + (sulfur carrier)-SH + AH2 + 2 S-adenosyl-L-methionine = 2-methylsulfanyl-N(6)-dimethylallyladenosine(37) in tRNA + (sulfur carrier)-H + 5'-deoxyadenosine + L-methionine + A + S-adenosyl-L-homocysteine + 2 H(+). Functionally, catalyzes the methylthiolation of N6-(dimethylallyl)adenosine (i(6)A), leading to the formation of 2-methylthio-N6-(dimethylallyl)adenosine (ms(2)i(6)A) at position 37 in tRNAs that read codons beginning with uridine. The protein is tRNA-2-methylthio-N(6)-dimethylallyladenosine synthase of Polynucleobacter asymbioticus (strain DSM 18221 / CIP 109841 / QLW-P1DMWA-1) (Polynucleobacter necessarius subsp. asymbioticus).